Consider the following 674-residue polypeptide: Xaa-Pro aminopeptidase 2 (674 aa).

A signal peptide spans 1-22 (MAQAYWQCYPWLVLLCACAWSY). N65 carries N-linked (GlcNAc...) asparagine glycosylation. Residue R116 coordinates substrate. N-linked (GlcNAc...) asparagine glycans are attached at residues N270, N278, and N293. A substrate-binding site is contributed by H430. Residues D450, D461, and H524 each coordinate Zn(2+). Residues H524, H533, and E555 each contribute to the substrate site. Zn(2+)-binding residues include E555 and E569. A650 carries the GPI-anchor amidated alanine lipid modification. The propeptide at 651-674 (RAPHIISWTSLWVASALAILSWSS) is removed in mature form.

Belongs to the peptidase M24B family. Homotrimer. Zn(2+) serves as cofactor. N-glycosylated. Strongly expressed in small intestine, heart and lung. Also detected in testis, skeletal muscle, spleen, liver, kidney, brain, uterus, eye, lymph node, thymus, stomach, prostate and bone marrow.

Its subcellular location is the cell membrane. It carries out the reaction Release of any N-terminal amino acid, including proline, that is linked to proline, even from a dipeptide or tripeptide.. Its function is as follows. Membrane-bound metalloprotease which catalyzes the removal of a penultimate prolyl residue from the N-termini of peptides, such as Arg-Pro-Pro. May play a role in the metabolism of the vasodilator bradykinin. The sequence is that of Xaa-Pro aminopeptidase 2 from Mus musculus (Mouse).